Consider the following 1146-residue polypeptide: Activator of SKN7 protein 10 (1146 aa).

Residues 1 to 15 (MSDYFSSRPSQTLTP) are compositionally biased toward polar residues. Disordered regions lie at residues 1–32 (MSDY…ASSI) and 171–194 (ITDP…KVGL). Position 344 is a phosphoserine (Ser-344). The region spanning 482–606 (CIKAGYFLKK…DCTLKDASST (125 aa)) is the PH domain. Positions 553–575 (NNHHRQASDVHNSSTTTGGTAGA) are disordered. Residues 564–575 (NSSTTTGGTAGA) show a composition bias toward low complexity. At Ser-793 the chain carries Phosphoserine. Thr-808 is subject to Phosphothreonine. 2 disordered regions span residues 835–854 (MATS…PQSM) and 909–982 (PVNS…TAMR). Residues 912-924 (SPGSSNSESSSGG) show a composition bias toward low complexity. A compositionally biased stretch (polar residues) spans 939–950 (YTQRNSEGSSPC). Residue Ser-944 is modified to Phosphoserine. Low complexity predominate over residues 958 to 968 (QQQQPLQMQPL). Ser-969 bears the Phosphoserine mark. The span at 969 to 982 (SRTSSSSVNVTAMR) shows a compositional bias: polar residues. The residue at position 1017 (Thr-1017) is a Phosphothreonine. A phosphoserine mark is found at Ser-1070, Ser-1095, and Ser-1098. The tract at residues 1124–1146 (GIQEDDGDSTNNDTIKLNQSIYS) is disordered. The span at 1132 to 1146 (STNNDTIKLNQSIYS) shows a compositional bias: polar residues.

Belongs to the RGC1 family. Component of the RNA polymerase II holoenzyme. Interacts with RPO21 and SSN8. Post-translationally, phosphorylated in response to various stresses. stress-induced phosphorylation is partially dependent on HOG1.

The protein localises to the cytoplasm. Functionally, positive regulator of FPS1 glycerol channel required for the glycerol efflux. As a component of the RNA polymerase II holoenzyme, is required for SSN8 destruction in response to oxidative stress but not heat shock. Required for cell survival in response to heat shock independent of SSN8. This Saccharomyces cerevisiae (strain ATCC 204508 / S288c) (Baker's yeast) protein is Activator of SKN7 protein 10 (ASK10).